Reading from the N-terminus, the 180-residue chain is Cytochrome b6-f complex subunit 4 (180 aa).

3 helical membrane-spanning segments follow: residues 36 to 56 (LSYI…GLAV), 95 to 115 (LLGV…PFLE), and 131 to 151 (TVSL…ALPI).

It belongs to the cytochrome b family. PetD subfamily. In terms of assembly, the 4 large subunits of the cytochrome b6-f complex are cytochrome b6, subunit IV (17 kDa polypeptide, petD), cytochrome f and the Rieske protein, while the 4 small subunits are petG, petL, petM and petN. The complex functions as a dimer.

It localises to the plastid. The protein resides in the chloroplast thylakoid membrane. Component of the cytochrome b6-f complex, which mediates electron transfer between photosystem II (PSII) and photosystem I (PSI), cyclic electron flow around PSI, and state transitions. The sequence is that of Cytochrome b6-f complex subunit 4 from Pinus thunbergii (Japanese black pine).